Here is a 335-residue protein sequence, read N- to C-terminus: Methionine import ATP-binding protein MetN 2 (335 aa).

The region spanning Ile2–Val242 is the ABC transporter domain. Gly38–Ser45 lines the ATP pocket.

It belongs to the ABC transporter superfamily. Methionine importer (TC 3.A.1.24) family. As to quaternary structure, the complex is composed of two ATP-binding proteins (MetN), two transmembrane proteins (MetI) and a solute-binding protein (MetQ).

Its subcellular location is the cell inner membrane. It catalyses the reaction L-methionine(out) + ATP + H2O = L-methionine(in) + ADP + phosphate + H(+). It carries out the reaction D-methionine(out) + ATP + H2O = D-methionine(in) + ADP + phosphate + H(+). In terms of biological role, part of the ABC transporter complex MetNIQ involved in methionine import. Responsible for energy coupling to the transport system. The chain is Methionine import ATP-binding protein MetN 2 from Pseudomonas aeruginosa (strain UCBPP-PA14).